The chain runs to 252 residues: Probable NADP-dependent dehydrogenase HI_1430 (252 aa).

An NADP(+)-binding site is contributed by 7 to 31; it reads LVTGATAGFGLAICKKLIEAGYKVI. A substrate-binding site is contributed by Ser137. Residue Tyr150 is the Proton acceptor of the active site.

Belongs to the short-chain dehydrogenases/reductases (SDR) family.

The protein is Probable NADP-dependent dehydrogenase HI_1430 of Haemophilus influenzae (strain ATCC 51907 / DSM 11121 / KW20 / Rd).